Consider the following 195-residue polypeptide: PRS fimbrial minor pilin protein (195 aa).

Positions 1 to 22 (MRLRFSVPLFFFGCVFVHGVFA) are cleaved as a signal peptide. Cysteine 58 and cysteine 97 are oxidised to a cystine.

This sequence belongs to the fimbrial protein family.

It localises to the secreted. The protein resides in the fimbrium. Its function is as follows. Fimbriae (also called pili), polar filaments radiating from the surface of the bacterium to a length of 0.5-1.5 micrometers and numbering 100-300 per cell, enable bacteria to colonize the epithelium of specific host organs. In terms of biological role, seems to anchor the pilus to the bacterial cell. In addition the stoichiometric relationship between PrsH and PrsA determines the pilus length. The protein is PRS fimbrial minor pilin protein (prsH) of Escherichia coli.